We begin with the raw amino-acid sequence, 1486 residues long: Chromosome partition protein MukB (1486 aa).

Gly34–Ser41 lines the ATP pocket. Coiled coils occupy residues Leu326 to Gln418, Leu444 to Gln480, and Arg509 to Val603. Positions Pro666 to Arg783 are flexible hinge. Coiled-coil stretches lie at residues Glu835–Glu923, Glu977–Ala1115, and Val1209–Ser1266.

The protein belongs to the SMC family. MukB subfamily. In terms of assembly, homodimerization via its hinge domain. Binds to DNA via its C-terminal region. Interacts, and probably forms a ternary complex, with MukE and MukF via its C-terminal region. The complex formation is stimulated by calcium or magnesium. Interacts with tubulin-related protein FtsZ.

It is found in the cytoplasm. It localises to the nucleoid. Plays a central role in chromosome condensation, segregation and cell cycle progression. Functions as a homodimer, which is essential for chromosome partition. Involved in negative DNA supercoiling in vivo, and by this means organize and compact chromosomes. May achieve or facilitate chromosome segregation by condensation DNA from both sides of a centrally located replisome during cell division. The polypeptide is Chromosome partition protein MukB (Escherichia coli O6:H1 (strain CFT073 / ATCC 700928 / UPEC)).